Here is a 519-residue protein sequence, read N- to C-terminus: Circadian clock oscillator protein KaiC (519 aa).

2 consecutive KaiC domains span residues 1–246 and 260–519; these read MSEK…VNIF and VRVS…GSDS. ATP-binding residues include Gly-48, Thr-49, Gly-50, Lys-51, Thr-52, Leu-53, Lys-223, Leu-224, Arg-225, Thr-227, His-229, Thr-239, Thr-289, Gly-290, Thr-291, Gly-292, Lys-293, Thr-294, and Leu-295. Mg(2+) is bound at residue Thr-52. Residue Thr-294 coordinates Mg(2+). Position 317 (Glu-317) interacts with Mg(2+). Trp-330 contacts ATP. Ser-430 carries the phosphoserine; by autocatalysis modification. At Thr-431 the chain carries Phosphothreonine; by autocatalysis. Arg-450, Lys-456, Met-457, Arg-458, Ser-460, His-462, and Lys-464 together coordinate ATP.

This sequence belongs to the KaiC family. As to quaternary structure, homohexamer; hexamerization is dependent on ATP-binding. The KaiABC complex composition changes during the circadian cycle to control KaiC phosphorylation. Complexes KaiC(6), KaiA(2-4):KaiC(6), KaiB(6):KaiC(6) and KaiC(6):KaiB(6):KaiA(12) are among the most important forms, many form cooperatively. KaiC interacts with SasA, activating its autokinase function and leading to RpaA activation. Mg(2+) is required as a cofactor. Phosphorylated on serine and threonine residues by autocatalysis. Has a 4 step phosphorylation cycle; the autokinase acts first on Thr-431, then Ser-430. When Ser-430 is modified KaiC switches to an autophosphatase mode, acting first on phospho-Thr-431 then phospho-Ser-430.

The catalysed reaction is L-seryl-[protein] + ATP = O-phospho-L-seryl-[protein] + ADP + H(+). It catalyses the reaction L-threonyl-[protein] + ATP = O-phospho-L-threonyl-[protein] + ADP + H(+). The enzyme catalyses ATP + H2O = ADP + phosphate + H(+). Its activity is regulated as follows. The interaction with KaiA enhances its phosphorylation status, while the interaction with KaiB decreases it. Functionally, central component of the KaiABC oscillator complex, which constitutes the main circadian regulator in cyanobacteria. Complex composition changes during the circadian cycle to control KaiC phosphorylation. KaiA stimulates KaiC autophosphorylation, while KaiB sequesters KaiA, leading to KaiC autodephosphorylation. Clock output pathways impact the RpaA transcriptional regulator. KaiC enhances the autophosphorylation activity of SasA, which then transfers its phosphate group to RpaA to activate it. KaiB and KaiC together enhance the phospho-RpaA dephosphatase activity of CikA. Its function is as follows. Has a weak, temperature-independent ATPase activity; ATPase activity defines the circadian period. The phosphorylation state of KaiC modulates its ATPase activity and effects KaiB binding. In Nostoc sp. (strain PCC 7120 / SAG 25.82 / UTEX 2576), this protein is Circadian clock oscillator protein KaiC.